Consider the following 228-residue polypeptide: Lipoprotein LpqN (228 aa).

The signal sequence occupies residues 1–19 (MKHFTAAVATVALSLALAG). C20 is lipidated: N-palmitoyl cysteine. Residue C20 is the site of S-diacylglycerol cysteine attachment. Residues 26–53 (TDSAPTTSPTTTSPTTSTTTTSATTSAQ) are disordered. Low complexity predominate over residues 28-52 (SAPTTSPTTTSPTTSTTTTSATTSA).

In terms of assembly, interacts with the periplasmic loop domains of the mycolate transporters MmpL3 and MmpL11. Also interacts with secreted cell envelope biosynthetic enzymes such as Ag85A. These interactions are weak and may require a putative mycobacterial adapter protein or molecule. Interacts with human ubiquitin ligase CBL.

It localises to the cell membrane. Its subcellular location is the secreted. Involved in cell envelope biogenesis. May act as a membrane fusion protein, connecting MmpL transporters with periplasmic proteins, and play a role in cell envelope lipid changes during biofilm maturation. In terms of biological role, is also a virulence factor required for intracellular survival. Associates with CBL, a host ubiquitin ligase, and probably blocks the normal functions of CBL and disturbs CBL-mediated antibacterial activity. Interaction counteracts antibacterial defense but causes a reciprocal enhancement of antiviral defense. The polypeptide is Lipoprotein LpqN (Mycobacterium tuberculosis (strain ATCC 25618 / H37Rv)).